The sequence spans 205 residues: Small ribosomal subunit protein uS4 (205 aa).

The disordered stretch occupies residues 18–46 (NIWGRPKSPVNRREYGPGQHGQRRKGKLS). The S4 RNA-binding domain occupies 94-157 (RRLDTVVYRS…KQLAIVLEAN (64 aa)).

It belongs to the universal ribosomal protein uS4 family. In terms of assembly, part of the 30S ribosomal subunit. Contacts protein S5. The interaction surface between S4 and S5 is involved in control of translational fidelity.

Its function is as follows. One of the primary rRNA binding proteins, it binds directly to 16S rRNA where it nucleates assembly of the body of the 30S subunit. Functionally, with S5 and S12 plays an important role in translational accuracy. In Rhodopseudomonas palustris (strain BisB5), this protein is Small ribosomal subunit protein uS4.